The sequence spans 454 residues: Bifunctional protein GlmU (454 aa).

The interval 1-226 (MSTTVIILAA…AFEVEGVNDR (226 aa)) is pyrophosphorylase. UDP-N-acetyl-alpha-D-glucosamine contacts are provided by residues 8 to 11 (LAAG), lysine 22, glutamine 73, 78 to 79 (GT), 100 to 102 (YGD), glycine 137, glutamate 151, asparagine 166, and asparagine 224. Aspartate 102 lines the Mg(2+) pocket. Residue asparagine 224 coordinates Mg(2+). A linker region spans residues 227-247 (LQLAALEREFQKQQAKELMQQ). Positions 248 to 454 (GVTFADPARF…NYQRPQKLKK (207 aa)) are N-acetyltransferase. 2 residues coordinate UDP-N-acetyl-alpha-D-glucosamine: arginine 330 and lysine 348. Histidine 360 functions as the Proton acceptor in the catalytic mechanism. UDP-N-acetyl-alpha-D-glucosamine is bound by residues tyrosine 363 and asparagine 374. Acetyl-CoA is bound by residues alanine 377, 383 to 384 (NY), serine 402, alanine 420, and arginine 437.

This sequence in the N-terminal section; belongs to the N-acetylglucosamine-1-phosphate uridyltransferase family. It in the C-terminal section; belongs to the transferase hexapeptide repeat family. As to quaternary structure, homotrimer. Requires Mg(2+) as cofactor.

It is found in the cytoplasm. The catalysed reaction is alpha-D-glucosamine 1-phosphate + acetyl-CoA = N-acetyl-alpha-D-glucosamine 1-phosphate + CoA + H(+). It catalyses the reaction N-acetyl-alpha-D-glucosamine 1-phosphate + UTP + H(+) = UDP-N-acetyl-alpha-D-glucosamine + diphosphate. Its pathway is nucleotide-sugar biosynthesis; UDP-N-acetyl-alpha-D-glucosamine biosynthesis; N-acetyl-alpha-D-glucosamine 1-phosphate from alpha-D-glucosamine 6-phosphate (route II): step 2/2. The protein operates within nucleotide-sugar biosynthesis; UDP-N-acetyl-alpha-D-glucosamine biosynthesis; UDP-N-acetyl-alpha-D-glucosamine from N-acetyl-alpha-D-glucosamine 1-phosphate: step 1/1. It functions in the pathway bacterial outer membrane biogenesis; LPS lipid A biosynthesis. Catalyzes the last two sequential reactions in the de novo biosynthetic pathway for UDP-N-acetylglucosamine (UDP-GlcNAc). The C-terminal domain catalyzes the transfer of acetyl group from acetyl coenzyme A to glucosamine-1-phosphate (GlcN-1-P) to produce N-acetylglucosamine-1-phosphate (GlcNAc-1-P), which is converted into UDP-GlcNAc by the transfer of uridine 5-monophosphate (from uridine 5-triphosphate), a reaction catalyzed by the N-terminal domain. This is Bifunctional protein GlmU from Acinetobacter baumannii (strain AYE).